A 195-amino-acid polypeptide reads, in one-letter code: Rho-related protein racB (195 aa).

Gly-10 to Thr-17 lines the GTP pocket. Residues Tyr-32–Tyr-40 carry the Effector region motif. GTP contacts are provided by residues Asp-57–Gln-61 and Thr-115–Asp-118. Cys-192 is subject to Cysteine methyl ester. Cys-192 carries S-geranylgeranyl cysteine lipidation. A propeptide spans Ser-193 to Leu-195 (removed in mature form).

Belongs to the small GTPase superfamily. Rho family. In terms of assembly, interacts with pakB.

It is found in the cell membrane. The chain is Rho-related protein racB (racB) from Dictyostelium discoideum (Social amoeba).